A 359-amino-acid polypeptide reads, in one-letter code: 3-dehydroquinate synthase (359 aa).

Residues 105–109 (GVVGD), 129–130 (TT), K142, K151, and 169–172 (TIKT) contribute to the NAD(+) site. 3 residues coordinate Zn(2+): E184, H247, and H263.

Belongs to the sugar phosphate cyclases superfamily. Dehydroquinate synthase family. Co(2+) serves as cofactor. Requires Zn(2+) as cofactor. It depends on NAD(+) as a cofactor.

Its subcellular location is the cytoplasm. It catalyses the reaction 7-phospho-2-dehydro-3-deoxy-D-arabino-heptonate = 3-dehydroquinate + phosphate. The protein operates within metabolic intermediate biosynthesis; chorismate biosynthesis; chorismate from D-erythrose 4-phosphate and phosphoenolpyruvate: step 2/7. Its function is as follows. Catalyzes the conversion of 3-deoxy-D-arabino-heptulosonate 7-phosphate (DAHP) to dehydroquinate (DHQ). The polypeptide is 3-dehydroquinate synthase (Ruminiclostridium cellulolyticum (strain ATCC 35319 / DSM 5812 / JCM 6584 / H10) (Clostridium cellulolyticum)).